An 831-amino-acid chain; its full sequence is SID1 transmembrane family member 1 (831 aa).

Residues 1–19 form the signal peptide; the sequence is MLDCPRLALLCALPWLLRA. Residues 20-308 are Extracellular-facing; sequence AVPGHRAEPL…SVKGSVYVKS (289 aa). N-linked (GlcNAc...) asparagine glycans are attached at residues N67, N83, N136, and N281. A helical transmembrane segment spans residues 309 to 329; sequence SLFSVFVFLSFYLGCLLVVFV. Residues 330 to 441 lie on the Cytoplasmic side of the membrane; it reads HHMRFQRKPV…DRRIVSKKYK (112 aa). Positions 354–408 are disordered; that stretch reads VSHPITASTPEGSNYGAIDESSSSPGRQMSSSDGGQPCHSDTDSSVEESDFDTMP. Low complexity predominate over residues 374 to 385; the sequence is SSSSPGRQMSSS. Over residues 397 to 408 the composition is skewed to acidic residues; sequence SSVEESDFDTMP. The helical transmembrane segment at 442 to 462 threads the bilayer; it reads IYFWNIITIAVFYALPVMQLV. Residues 463 to 493 are Extracellular-facing; sequence ITYQTVVNVTGNQDICYYNFLCAHPLGVLSA. N-linked (GlcNAc...) asparagine glycosylation occurs at N470. Residues 494-514 traverse the membrane as a helical segment; sequence FNNILSNLGHVLLGFLFLLIV. Residues 515–540 lie on the Cytoplasmic side of the membrane; that stretch reads LRRDLLHRRALEAKDIFAMEYGIPKH. A helical membrane pass occupies residues 541–561; the sequence is FGLFYAMGIALMMEGVLSACY. Topologically, residues 562-571 are extracellular; sequence HVCPNYSNFQ. An N-linked (GlcNAc...) asparagine glycan is attached at N566. Residues 572–589 traverse the membrane as a helical segment; the sequence is FDTSFMYMIAGLCMLKLY. At 590-599 the chain is on the cytoplasmic side; it reads QTRHPDINAS. A helical transmembrane segment spans residues 600–620; sequence AYSAYASFAVVITLTVLGVVF. At 621 to 625 the chain is on the extracellular side; the sequence is GKNDV. Residues 626–646 traverse the membrane as a helical segment; sequence WFWIIFSAIHVLASLALSTQI. The Cytoplasmic segment spans residues 647-687; sequence YYMGRFKIDVSDTDLGIFRRAAMVFYTDCIQQCSRPLYMDR. A helical membrane pass occupies residues 688-708; the sequence is MVLLIVGNLVNWSFALFGLIY. Residues 709–714 lie on the Extracellular side of the membrane; that stretch reads RPRDFA. A helical membrane pass occupies residues 715–735; it reads SYMLGIFICNLLLYLAFYIIM. Topologically, residues 736–745 are cytoplasmic; it reads KLRSSEKVLP. The helical transmembrane segment at 746 to 766 threads the bilayer; sequence LPVFCIVATAVVWAAALYFFF. At 767 to 795 the chain is on the extracellular side; sequence QNLSSWEGTPAESREKNRECVLLGFFDDH. N-linked (GlcNAc...) asparagine glycosylation is present at N768. The helical transmembrane segment at 796 to 816 threads the bilayer; that stretch reads DIWHFLSATALFFSFLVLLTL. The Cytoplasmic portion of the chain corresponds to 817–831; sequence DDDLDVVRRDQIPVF.

The protein belongs to the SID1 family.

The protein resides in the membrane. Its function is as follows. In vitro binds long double-stranded RNA (dsRNA) (500 and 700 base pairs), but not dsRNA shorter than 300 bp. Not involved in RNA autophagy, a process in which RNA is directly imported into lysosomes in an ATP-dependent manner, and degraded. This is SID1 transmembrane family member 1 (Sidt1) from Rattus norvegicus (Rat).